The primary structure comprises 249 residues: Ribosomal RNA small subunit methyltransferase J (249 aa).

S-adenosyl-L-methionine contacts are provided by residues 99–100 (RD), 115–116 (ER), 151–152 (SS), and D169.

The protein belongs to the methyltransferase superfamily. RsmJ family.

The protein resides in the cytoplasm. It catalyses the reaction guanosine(1516) in 16S rRNA + S-adenosyl-L-methionine = N(2)-methylguanosine(1516) in 16S rRNA + S-adenosyl-L-homocysteine + H(+). In terms of biological role, specifically methylates the guanosine in position 1516 of 16S rRNA. The protein is Ribosomal RNA small subunit methyltransferase J of Shewanella oneidensis (strain ATCC 700550 / JCM 31522 / CIP 106686 / LMG 19005 / NCIMB 14063 / MR-1).